The sequence spans 94 residues: MLKPLGDRVVLKAETEEEKTVGGIVLASNVKEKPTTGKVIAVGEGRTLENGQKLAPAVKEGDRVLFDKYAGNEVEYNGEKFLVVHAKDLVAIVE.

The protein belongs to the GroES chaperonin family. Heptamer of 7 subunits arranged in a ring. Interacts with the chaperonin GroEL.

It is found in the cytoplasm. In terms of biological role, together with the chaperonin GroEL, plays an essential role in assisting protein folding. The GroEL-GroES system forms a nano-cage that allows encapsulation of the non-native substrate proteins and provides a physical environment optimized to promote and accelerate protein folding. GroES binds to the apical surface of the GroEL ring, thereby capping the opening of the GroEL channel. The polypeptide is Co-chaperonin GroES (Limosilactobacillus reuteri (strain DSM 20016) (Lactobacillus reuteri)).